A 276-amino-acid polypeptide reads, in one-letter code: SF-assemblin (276 aa).

The segment at 1 to 31 (MSLRPFETPGGLSSLSPRRRDFSPTRPGTNG) is nonhelical region. The segment at 1 to 37 (MSLRPFETPGGLSSLSPRRRDFSPTRPGTNGPSAKLE) is disordered. Positions 32 to 276 (PSAKLEHVTE…LQEGLKLVSA (245 aa)) are rod. The stretch at 67-145 (LLQESLQRIE…LVRDERESRR (79 aa)) forms a coiled coil.

It belongs to the SF-assemblin family.

The protein resides in the cytoplasm. The protein localises to the cytoskeleton. Its function is as follows. Major component of the striated microtubule-associated fibers (SMAFs; system-I-fibers). The sequence is that of SF-assemblin from Chlamydomonas reinhardtii (Chlamydomonas smithii).